The chain runs to 577 residues: Proline--tRNA ligase (577 aa).

This sequence belongs to the class-II aminoacyl-tRNA synthetase family. ProS type 1 subfamily. In terms of assembly, homodimer.

It is found in the cytoplasm. It catalyses the reaction tRNA(Pro) + L-proline + ATP = L-prolyl-tRNA(Pro) + AMP + diphosphate. Catalyzes the attachment of proline to tRNA(Pro) in a two-step reaction: proline is first activated by ATP to form Pro-AMP and then transferred to the acceptor end of tRNA(Pro). As ProRS can inadvertently accommodate and process non-cognate amino acids such as alanine and cysteine, to avoid such errors it has two additional distinct editing activities against alanine. One activity is designated as 'pretransfer' editing and involves the tRNA(Pro)-independent hydrolysis of activated Ala-AMP. The other activity is designated 'posttransfer' editing and involves deacylation of mischarged Ala-tRNA(Pro). The misacylated Cys-tRNA(Pro) is not edited by ProRS. The polypeptide is Proline--tRNA ligase (Herminiimonas arsenicoxydans).